The primary structure comprises 357 residues: Metacaspase-3 (357 aa).

His168 is an active-site residue. Ca(2+) contacts are provided by Asp183, Asp199, and Asp200. Cys223 is a catalytic residue. A Ca(2+)-binding site is contributed by Asp230.

The protein belongs to the peptidase C14B family.

The protein resides in the recycling endosome. Its activity is regulated as follows. Activated by Ca(2+). Functionally, cysteine protease that cleaves specifically after arginine or lysine residues. In the bloodstream form, may cleave inactive metacaspase-4 MCA4 prior to MCA4 secretion. The chain is Metacaspase-3 from Trypanosoma brucei brucei.